A 402-amino-acid chain; its full sequence is Phosphoglycerate kinase (402 aa).

Substrate is bound by residues 24-26, R40, 63-66, R122, and R155; these read DFN and HFGR. Residues K206, G297, E328, and 358–361 contribute to the ATP site; that span reads GGDS.

This sequence belongs to the phosphoglycerate kinase family. In terms of assembly, monomer.

The protein localises to the cytoplasm. The catalysed reaction is (2R)-3-phosphoglycerate + ATP = (2R)-3-phospho-glyceroyl phosphate + ADP. It participates in carbohydrate degradation; glycolysis; pyruvate from D-glyceraldehyde 3-phosphate: step 2/5. The protein is Phosphoglycerate kinase of Prochlorococcus marinus (strain MIT 9515).